A 236-amino-acid polypeptide reads, in one-letter code: uncharacterized protein (236 aa).

Belongs to the RHS family.

This is an uncharacterized protein from Escherichia coli (strain K12).